The sequence spans 600 residues: Aspartate--tRNA(Asp/Asn) ligase (600 aa).

Glu-174 provides a ligand contact to L-aspartate. Positions 198-201 (QLFK) are aspartate. Arg-220 contacts L-aspartate. ATP-binding positions include 220–222 (RDE) and Gln-229. An L-aspartate-binding site is contributed by His-457. Glu-491 serves as a coordination point for ATP. Arg-498 serves as a coordination point for L-aspartate. 543 to 546 (GLDR) contributes to the ATP binding site.

Belongs to the class-II aminoacyl-tRNA synthetase family. Type 1 subfamily. Homodimer.

The protein localises to the cytoplasm. The enzyme catalyses tRNA(Asx) + L-aspartate + ATP = L-aspartyl-tRNA(Asx) + AMP + diphosphate. Its function is as follows. Aspartyl-tRNA synthetase with relaxed tRNA specificity since it is able to aspartylate not only its cognate tRNA(Asp) but also tRNA(Asn). Reaction proceeds in two steps: L-aspartate is first activated by ATP to form Asp-AMP and then transferred to the acceptor end of tRNA(Asp/Asn). This chain is Aspartate--tRNA(Asp/Asn) ligase, found in Burkholderia lata (strain ATCC 17760 / DSM 23089 / LMG 22485 / NCIMB 9086 / R18194 / 383).